Here is a 505-residue protein sequence, read N- to C-terminus: Amidophosphoribosyltransferase (505 aa).

C2 serves as the catalytic Nucleophile. The Glutamine amidotransferase type-2 domain occupies 2–236; that stretch reads CGIVGIAGVM…PGEAIYITEE (235 aa). Mg(2+)-binding residues include T305, D367, and D368.

It in the C-terminal section; belongs to the purine/pyrimidine phosphoribosyltransferase family. Homotetramer. Mg(2+) is required as a cofactor.

The enzyme catalyses 5-phospho-beta-D-ribosylamine + L-glutamate + diphosphate = 5-phospho-alpha-D-ribose 1-diphosphate + L-glutamine + H2O. The protein operates within purine metabolism; IMP biosynthesis via de novo pathway; N(1)-(5-phospho-D-ribosyl)glycinamide from 5-phospho-alpha-D-ribose 1-diphosphate: step 1/2. Its activity is regulated as follows. Inhibited by iodoacetamide and by the glutamine analogs chloroketone and DON. Functionally, catalyzes the formation of phosphoribosylamine from phosphoribosylpyrophosphate (PRPP) and glutamine. Can also use NH(3) in place of glutamine. This Escherichia coli (strain K12) protein is Amidophosphoribosyltransferase.